The following is a 41-amino-acid chain: Large ribosomal subunit protein bL36 (41 aa).

The protein belongs to the bacterial ribosomal protein bL36 family.

The chain is Large ribosomal subunit protein bL36 from Jannaschia sp. (strain CCS1).